Consider the following 313-residue polypeptide: Porphobilinogen deaminase (313 aa).

C242 carries the post-translational modification S-(dipyrrolylmethanemethyl)cysteine.

It belongs to the HMBS family. In terms of assembly, monomer. Requires dipyrromethane as cofactor.

The enzyme catalyses 4 porphobilinogen + H2O = hydroxymethylbilane + 4 NH4(+). It participates in porphyrin-containing compound metabolism; protoporphyrin-IX biosynthesis; coproporphyrinogen-III from 5-aminolevulinate: step 2/4. Tetrapolymerization of the monopyrrole PBG into the hydroxymethylbilane pre-uroporphyrinogen in several discrete steps. The polypeptide is Porphobilinogen deaminase (Salmonella dublin (strain CT_02021853)).